We begin with the raw amino-acid sequence, 209 residues long: Uracil phosphoribosyltransferase (209 aa).

5-phospho-alpha-D-ribose 1-diphosphate-binding positions include Arg-79, Arg-104, and 131–139 (DPMLATGGS). Residues Val-194 and 199-201 (GDA) each bind uracil. Asp-200 contributes to the 5-phospho-alpha-D-ribose 1-diphosphate binding site.

It belongs to the UPRTase family. It depends on Mg(2+) as a cofactor.

The enzyme catalyses UMP + diphosphate = 5-phospho-alpha-D-ribose 1-diphosphate + uracil. It participates in pyrimidine metabolism; UMP biosynthesis via salvage pathway; UMP from uracil: step 1/1. Its activity is regulated as follows. Allosterically activated by GTP. Its function is as follows. Catalyzes the conversion of uracil and 5-phospho-alpha-D-ribose 1-diphosphate (PRPP) to UMP and diphosphate. This chain is Uracil phosphoribosyltransferase, found in Clostridium botulinum (strain ATCC 19397 / Type A).